A 340-amino-acid polypeptide reads, in one-letter code: MEFDAVLLLSFGGPEGPEQVRPFLENVTRGRGVPPERLDAVAEHYMHFGGVSPINGINRALVTELRAEVGLPVYFGNRNWEPYVEDTVMAMRDNGVKRAAVFATSAWSGYSGCTQYVEDIARARRAAGPDAPELVKLRSYFDHPLFVEMFADAIAAAAATVPKGARLVFTAHSIPVAADRRCGPGLYSRQVAYAASLVAAAAGYDDYDLAWQSRSGPPQVPWLEPDVADHLEMLRAGGVKAVIVCPIGFVADHIEVVWDLDAELRAQAQDAGIALARAATPNADRRFARLARGLIEELRSGGEPARVGGPDSVSGCLAGVNGEPCRPPHCAARETAPQGA.

The Fe-coproporphyrin III site is built by S52 and Y116. Fe(2+) contacts are provided by H172 and E255.

Belongs to the ferrochelatase family.

The protein resides in the cytoplasm. The enzyme catalyses Fe-coproporphyrin III + 2 H(+) = coproporphyrin III + Fe(2+). The protein operates within porphyrin-containing compound metabolism; protoheme biosynthesis. Involved in coproporphyrin-dependent heme b biosynthesis. Catalyzes the insertion of ferrous iron into coproporphyrin III to form Fe-coproporphyrin III. The polypeptide is Coproporphyrin III ferrochelatase (Mycobacterium ulcerans (strain Agy99)).